A 325-amino-acid chain; its full sequence is Acetyl-coenzyme A carboxylase carboxyl transferase subunit alpha (325 aa).

The CoA carboxyltransferase C-terminal domain maps to 35 to 292 (EINKLEARLE…DDVLKRSLRE (258 aa)).

Belongs to the AccA family. Acetyl-CoA carboxylase is a heterohexamer composed of biotin carboxyl carrier protein (AccB), biotin carboxylase (AccC) and two subunits each of ACCase subunit alpha (AccA) and ACCase subunit beta (AccD).

Its subcellular location is the cytoplasm. It catalyses the reaction N(6)-carboxybiotinyl-L-lysyl-[protein] + acetyl-CoA = N(6)-biotinyl-L-lysyl-[protein] + malonyl-CoA. Its pathway is lipid metabolism; malonyl-CoA biosynthesis; malonyl-CoA from acetyl-CoA: step 1/1. Its function is as follows. Component of the acetyl coenzyme A carboxylase (ACC) complex. First, biotin carboxylase catalyzes the carboxylation of biotin on its carrier protein (BCCP) and then the CO(2) group is transferred by the carboxyltransferase to acetyl-CoA to form malonyl-CoA. This Anoxybacillus flavithermus (strain DSM 21510 / WK1) protein is Acetyl-coenzyme A carboxylase carboxyl transferase subunit alpha.